The following is a 189-amino-acid chain: MPQKQLILASTSKYRQELLSRLAYSYSAQAPLVDEEKEKDPSLAPQALAEKLADLKAASLKAADKVVIGGDQLVSFEGRIIGKAHTPERAIEQLMSMQGKTHDLITAICVYDGDKKIAYTDITRMHMKKMTRAQIERYVQLDNPIDCAGSYKIEKHGIMLFDKIESQDFTAIQGLPLIELGKILENANL.

D71 acts as the Proton acceptor in catalysis.

Belongs to the Maf family. YceF subfamily. A divalent metal cation is required as a cofactor.

The protein resides in the cytoplasm. The catalysed reaction is N(7)-methyl-GTP + H2O = N(7)-methyl-GMP + diphosphate + H(+). Nucleoside triphosphate pyrophosphatase that hydrolyzes 7-methyl-GTP (m(7)GTP). May have a dual role in cell division arrest and in preventing the incorporation of modified nucleotides into cellular nucleic acids. This Bdellovibrio bacteriovorus (strain ATCC 15356 / DSM 50701 / NCIMB 9529 / HD100) protein is 7-methyl-GTP pyrophosphatase.